Reading from the N-terminus, the 185-residue chain is MSNLFIGELVSLSIMAFALGTDAFSVGLGMGMIQLKKKQIFHIGVVIGLFHVMMPLAGMAAGHLLSGFLGMLAVYIGGSLLFILGVQMIIAAFKQSDGPLISPAGSGLLLFAIGVSLDSFSVGLSLGMNGSNPFLAVTLFGVFSTVLTWAGLLAGRKVQSWLGSYSEALGGAILIGFGLKLLLPV.

Helical transmembrane passes span 4–24 (LFIG…TDAF), 40–60 (IFHI…AGMA), 64–84 (LLSG…LFIL), 108–128 (LLLF…SLGM), 134–154 (FLAV…GLLA), and 165–185 (YSEA…LLPV).

The protein belongs to the MntP (TC 9.B.29) family.

It localises to the cell membrane. Functionally, probably functions as a manganese efflux pump. In Bacillus velezensis (strain DSM 23117 / BGSC 10A6 / LMG 26770 / FZB42) (Bacillus amyloliquefaciens subsp. plantarum), this protein is Putative manganese efflux pump MntP.